The chain runs to 260 residues: Thiazole synthase (260 aa).

Catalysis depends on K102, which acts as the Schiff-base intermediate with DXP. Residues G163, 189–190, and 211–212 contribute to the 1-deoxy-D-xylulose 5-phosphate site; these read AG and NT.

This sequence belongs to the ThiG family. Homotetramer. Forms heterodimers with either ThiH or ThiS.

It localises to the cytoplasm. The enzyme catalyses [ThiS sulfur-carrier protein]-C-terminal-Gly-aminoethanethioate + 2-iminoacetate + 1-deoxy-D-xylulose 5-phosphate = [ThiS sulfur-carrier protein]-C-terminal Gly-Gly + 2-[(2R,5Z)-2-carboxy-4-methylthiazol-5(2H)-ylidene]ethyl phosphate + 2 H2O + H(+). Its pathway is cofactor biosynthesis; thiamine diphosphate biosynthesis. Catalyzes the rearrangement of 1-deoxy-D-xylulose 5-phosphate (DXP) to produce the thiazole phosphate moiety of thiamine. Sulfur is provided by the thiocarboxylate moiety of the carrier protein ThiS. In vitro, sulfur can be provided by H(2)S. The polypeptide is Thiazole synthase (Geotalea uraniireducens (strain Rf4) (Geobacter uraniireducens)).